Here is a 75-residue protein sequence, read N- to C-terminus: Small ribosomal subunit protein bS18c (75 aa).

Belongs to the bacterial ribosomal protein bS18 family. In terms of assembly, part of the 30S ribosomal subunit.

Its subcellular location is the plastid. This is Small ribosomal subunit protein bS18c from Aneura mirabilis (Parasitic liverwort).